A 179-amino-acid chain; its full sequence is Coiled-coil domain-containing protein 32 (179 aa).

The disordered stretch occupies residues 36 to 65; the sequence is DNAFSDSFMDSHPAGESHTAAADSAVQPAG. Residues 75–98 are a coiled coil; sequence EVYLASLEKKLRRIKGLNEEVTSK. Positions 158–179 are disordered; that stretch reads LIPPESQAEKPEAGDKPAAAEQ.

In terms of assembly, interacts with AP2S1; the interaction is direct and mediates association with adaptor protein complex 2 (AP-2).

The protein resides in the membrane. It is found in the coated pit. Functionally, regulates clathrin-mediated endocytsois of cargos such as transferrin probably through the association and modulation of adaptor protein complex 2 (AP-2). Has a role in ciliogenesis. Required for proper cephalic and left/right axis development. The polypeptide is Coiled-coil domain-containing protein 32 (Ccdc32) (Mus musculus (Mouse)).